Here is a 499-residue protein sequence, read N- to C-terminus: Guanosine-5'-triphosphate,3'-diphosphate pyrophosphatase (499 aa).

It belongs to the GppA/Ppx family. GppA subfamily.

The enzyme catalyses guanosine 3'-diphosphate 5'-triphosphate + H2O = guanosine 3',5'-bis(diphosphate) + phosphate + H(+). The protein operates within purine metabolism; ppGpp biosynthesis; ppGpp from GTP: step 2/2. Catalyzes the conversion of pppGpp to ppGpp. Guanosine pentaphosphate (pppGpp) is a cytoplasmic signaling molecule which together with ppGpp controls the 'stringent response', an adaptive process that allows bacteria to respond to amino acid starvation, resulting in the coordinated regulation of numerous cellular activities. This chain is Guanosine-5'-triphosphate,3'-diphosphate pyrophosphatase, found in Sodalis glossinidius (strain morsitans).